Reading from the N-terminus, the 301-residue chain is DNA repair protein RecO (301 aa).

Residues proline 272 to leucine 301 form a disordered region.

It belongs to the RecO family.

In terms of biological role, involved in DNA repair and RecF pathway recombination. The protein is DNA repair protein RecO of Synechococcus sp. (strain JA-3-3Ab) (Cyanobacteria bacterium Yellowstone A-Prime).